A 368-amino-acid polypeptide reads, in one-letter code: N-acetylneuraminate epimerase (368 aa).

The first 19 residues, 1-19 (MNKTITALAIIMASFAANA), serve as a signal peptide directing secretion. 7 Kelch repeats span residues 40 to 84 (TVYI…AFID), 86 to 137 (NLYV…FVHN), 139 to 173 (KAYV…KINA), 174 to 219 (YYFD…VNKG), 222 to 265 (TWLI…VAGG), 287 to 336 (ENYQ…PWNN), and 338 to 367 (LLII…VTVQ). The active-site Proton acceptor is E228.

The protein belongs to the NanM family. In terms of assembly, homodimer.

It is found in the periplasm. It catalyses the reaction N-acetyl-alpha-neuraminate = N-acetyl-beta-neuraminate. Its function is as follows. Converts alpha-N-acetylneuranimic acid (Neu5Ac) to the beta-anomer, accelerating the equilibrium between the alpha- and beta-anomers. Probably facilitates sialidase-negative bacteria to compete successfully for limited amounts of extracellular Neu5Ac, which is likely taken up in the beta-anomer. In addition, the rapid removal of sialic acid from solution might be advantageous to the bacterium to damp down host responses. The protein is N-acetylneuraminate epimerase of Escherichia coli O139:H28 (strain E24377A / ETEC).